We begin with the raw amino-acid sequence, 178 residues long: ATP-dependent protease subunit HslV (178 aa).

Residue threonine 7 is part of the active site. Na(+) contacts are provided by glycine 162, cysteine 165, and threonine 168.

The protein belongs to the peptidase T1B family. HslV subfamily. A double ring-shaped homohexamer of HslV is capped on each side by a ring-shaped HslU homohexamer. The assembly of the HslU/HslV complex is dependent on binding of ATP.

It is found in the cytoplasm. It catalyses the reaction ATP-dependent cleavage of peptide bonds with broad specificity.. Its activity is regulated as follows. Allosterically activated by HslU binding. Its function is as follows. Protease subunit of a proteasome-like degradation complex believed to be a general protein degrading machinery. The sequence is that of ATP-dependent protease subunit HslV from Cupriavidus necator (strain ATCC 17699 / DSM 428 / KCTC 22496 / NCIMB 10442 / H16 / Stanier 337) (Ralstonia eutropha).